A 218-amino-acid polypeptide reads, in one-letter code: Adenylate kinase (218 aa).

10 to 15 (GAGKGT) is an ATP binding site. The segment at 30–59 (STGDMFRAAMANQTEMGRLAKSFIDKGELV) is NMP. AMP contacts are provided by residues Thr-31, Arg-36, 57-59 (ELV), 86-89 (GYPR), and Gln-93. Residues 127–165 (GRFICRSCGSTYHKVFNPTKVEGTCDVCGGHEFFQREDD) are LID. Arg-128 provides a ligand contact to ATP. The Zn(2+) site is built by Cys-131 and Cys-134. Residue 137–138 (TY) participates in ATP binding. The Zn(2+) site is built by Cys-151 and Cys-154. Positions 162 and 173 each coordinate AMP. Position 201 (Gln-201) interacts with ATP.

It belongs to the adenylate kinase family. As to quaternary structure, monomer.

It localises to the cytoplasm. It carries out the reaction AMP + ATP = 2 ADP. It participates in purine metabolism; AMP biosynthesis via salvage pathway; AMP from ADP: step 1/1. Catalyzes the reversible transfer of the terminal phosphate group between ATP and AMP. Plays an important role in cellular energy homeostasis and in adenine nucleotide metabolism. The polypeptide is Adenylate kinase (Streptococcus thermophilus (strain CNRZ 1066)).